Here is a 355-residue protein sequence, read N- to C-terminus: Tetraacyldisaccharide 4'-kinase (355 aa).

48-55 lines the ATP pocket; that stretch reads SVGGTGKT.

The protein belongs to the LpxK family.

It catalyses the reaction a lipid A disaccharide + ATP = a lipid IVA + ADP + H(+). Its pathway is glycolipid biosynthesis; lipid IV(A) biosynthesis; lipid IV(A) from (3R)-3-hydroxytetradecanoyl-[acyl-carrier-protein] and UDP-N-acetyl-alpha-D-glucosamine: step 6/6. Transfers the gamma-phosphate of ATP to the 4'-position of a tetraacyldisaccharide 1-phosphate intermediate (termed DS-1-P) to form tetraacyldisaccharide 1,4'-bis-phosphate (lipid IVA). The chain is Tetraacyldisaccharide 4'-kinase from Pelodictyon phaeoclathratiforme (strain DSM 5477 / BU-1).